A 368-amino-acid polypeptide reads, in one-letter code: GDP-fucose transporter 1 (368 aa).

Transmembrane regions (helical) follow at residues leucine 64–leucine 84, leucine 98–isoleucine 118, valine 141–tyrosine 161, phenylalanine 166–leucine 186, threonine 195–phenylalanine 215, tryptophan 217–valine 237, leucine 251–glycine 271, phenylalanine 287–methionine 307, and alanine 332–isoleucine 352.

Belongs to the TPT transporter family. SLC35C subfamily.

The protein localises to the golgi apparatus membrane. It carries out the reaction GMP(out) + GDP-beta-L-fucose(in) = GMP(in) + GDP-beta-L-fucose(out). In terms of biological role, antiporter specific for GDP-l-fucose and depending on the concomitant reverse transport of GMP. Involved in GDP-fucose import from the cytoplasm into the Golgi lumen. This is GDP-fucose transporter 1 (slc35c1) from Dictyostelium discoideum (Social amoeba).